The chain runs to 1057 residues: Atrial natriuretic peptide receptor 1 (1057 aa).

An N-terminal signal peptide occupies residues 1-28 (MPGSRRVRPRLRALLLLPPLLLLRSGHA). Residues 29-469 (SDLTVAVVLP…CNQDHFSTLE (441 aa)) are Extracellular-facing. The N-linked (GlcNAc...) asparagine glycan is linked to N41. Residues S81, G113, and C114 each contribute to the chloride site. 2 disulfide bridges follow: C88–C114 and C192–C241. N-linked (GlcNAc...) asparagine glycans are attached at residues N208, N334, N375, N382, and N423. C451 and C460 are oxidised to a cystine. The chain crosses the membrane as a helical span at residues 470 to 490 (VLALVGSLSLVSFLIVSFFIY). Topologically, residues 491–1057 (RKMQLEKELV…LGERGCSTRG (567 aa)) are cytoplasmic. 2 positions are modified to phosphoserine: S515 and S525. Positions 524-801 (GSRLTLSGRG…QIRLALRKFN (278 aa)) constitute a Protein kinase domain. T528 bears the Phosphothreonine mark. Phosphoserine is present on residues S530, S534, and S538. Residue T541 is modified to Phosphothreonine. In terms of domain architecture, Guanylate cyclase spans 872 to 1002 (TIYFSDIVGF…DTVNTASRME (131 aa)).

This sequence belongs to the adenylyl cyclase class-4/guanylyl cyclase family. As to quaternary structure, homodimer. Post-translationally, phosphorylation of the protein kinase-like domain is required for full activation by ANP.

It is found in the membrane. It carries out the reaction GTP = 3',5'-cyclic GMP + diphosphate. In terms of biological role, receptor for the atrial natriuretic peptide NPPA/ANP and the brain natriuretic peptide NPPB/BNP which are potent vasoactive hormones playing a key role in cardiovascular homeostasis. Plays an essential role in the regulation of endothelial cell senescence and vascular aging. Upon activation by ANP or BNP, stimulates the production of cyclic guanosine monophosphate (cGMP) that promotes vascular tone and volume homeostasis by activation of protein kinase cGMP-dependent 1/PRKG1 and subsequently PRKAA1, thereby controlling blood pressure and maintaining cardiovascular homeostasis. In Mus musculus (Mouse), this protein is Atrial natriuretic peptide receptor 1 (Npr1).